Reading from the N-terminus, the 237-residue chain is Ribonuclease PH (237 aa).

Phosphate is bound by residues arginine 86 and glycine 124–arginine 126.

This sequence belongs to the RNase PH family. In terms of assembly, homohexameric ring arranged as a trimer of dimers.

The catalysed reaction is tRNA(n+1) + phosphate = tRNA(n) + a ribonucleoside 5'-diphosphate. Phosphorolytic 3'-5' exoribonuclease that plays an important role in tRNA 3'-end maturation. Removes nucleotide residues following the 3'-CCA terminus of tRNAs; can also add nucleotides to the ends of RNA molecules by using nucleoside diphosphates as substrates, but this may not be physiologically important. Probably plays a role in initiation of 16S rRNA degradation (leading to ribosome degradation) during starvation. The protein is Ribonuclease PH of Bradyrhizobium diazoefficiens (strain JCM 10833 / BCRC 13528 / IAM 13628 / NBRC 14792 / USDA 110).